The following is a 769-amino-acid chain: 5-methyltetrahydropteroyltriglutamate--homocysteine methyltransferase (769 aa).

5-methyltetrahydropteroyltri-L-glutamate is bound by residues 16–19 (RELK) and Lys121. Positions 415–450 (SMTERDSPHSSRSPLQREALDLPTLPTTTIGSFPQT) are disordered. Positions 439-449 (LPTTTIGSFPQ) are enriched in polar residues. Residues 444–446 (IGS) and Glu497 each bind L-homocysteine. Residues 444 to 446 (IGS) and Glu497 contribute to the L-methionine site. 5-methyltetrahydropteroyltri-L-glutamate contacts are provided by residues 528–529 (RC) and Trp574. Asp612 serves as a coordination point for L-homocysteine. Asp612 is an L-methionine binding site. Glu618 is a 5-methyltetrahydropteroyltri-L-glutamate binding site. Positions 654, 656, and 678 each coordinate Zn(2+). The Proton donor role is filled by His707. Zn(2+) is bound at residue Cys739.

It belongs to the vitamin-B12 independent methionine synthase family. It depends on Zn(2+) as a cofactor.

The enzyme catalyses 5-methyltetrahydropteroyltri-L-glutamate + L-homocysteine = tetrahydropteroyltri-L-glutamate + L-methionine. It participates in amino-acid biosynthesis; L-methionine biosynthesis via de novo pathway; L-methionine from L-homocysteine (MetE route): step 1/1. Functionally, catalyzes the transfer of a methyl group from 5-methyltetrahydrofolate to homocysteine resulting in methionine formation. In Salinibacter ruber (strain DSM 13855 / M31), this protein is 5-methyltetrahydropteroyltriglutamate--homocysteine methyltransferase.